The sequence spans 542 residues: Aspartate kinase FUB3 (542 aa).

ACT domains follow at residues 404 to 472 (ILSN…VLPD) and 478 to 542 (LVGA…KSAI).

It belongs to the aspartokinase family.

It carries out the reaction L-aspartate + ATP = 4-phospho-L-aspartate + ADP. The protein operates within mycotoxin biosynthesis. Functionally, aspartate kinase; part of the gene cluster that mediates the biosynthesis of fusaric acid, a mycotoxin with low to moderate toxicity to animals and humans, but with high phytotoxic properties. L-aspartate is suggested as fusaric acid amino acid precursor that is activated and further processed to O-acetyl-L-homoserine by cluster enzymes aspartate kinase FUB3 and homoserine O-acetyltransferase FUB5, as well as enzymes of the primary metabolism. The polyketide synthase (PKS) FUB1 generates the triketide trans-2-hexenal which is presumptively released by the hydrolase FUB4 and linked to the NRPS-bound amino acid precursor by NAD(P)-dependent dehydrogenase FUB6. FUB1, FUB4, and the non-canonical NRPS Fub8 may form an enzyme complex. Further processing of the NRPS-bound intermediate might be carried out by FUB6 and the sulfhydrylase FUB7, enabling a spontaneous electrocyclization to close the carbon backbone of fusaric acid. Dihydrofusaric acid is likely to be released via reduction by the thioester reductase (TR) domain of FUB8 whereupon the final oxidation to fusaric acid may (also) be performed by the FMN-dependent dehydrogenase FUB9. The sequence is that of Aspartate kinase FUB3 from Fusarium oxysporum f. sp. lycopersici (strain 4287 / CBS 123668 / FGSC 9935 / NRRL 34936) (Fusarium vascular wilt of tomato).